Here is an 86-residue protein sequence, read N- to C-terminus: Toxin ICK-18 (86 aa).

The N-terminal stretch at 1–19 (MKTIFALVFCCAIAVVVLG) is a signal peptide. 4 disulfide bridges follow: Cys35–Cys49, Cys42–Cys61, Cys48–Cys76, and Cys79–Cys86.

The protein belongs to the neurotoxin 21 family. As to expression, expressed by the venom gland.

The protein localises to the secreted. In terms of biological role, probable neurotoxin with ion channel impairing activity. This Trittame loki (Brush-footed trapdoor spider) protein is Toxin ICK-18.